We begin with the raw amino-acid sequence, 125 residues long: Small ribosomal subunit protein uS12m (125 aa).

It belongs to the universal ribosomal protein uS12 family. As to quaternary structure, component of the mitochondrial ribosome small subunit.

The protein resides in the mitochondrion. Protein S12 is involved in the translation initiation step. This is Small ribosomal subunit protein uS12m (RPS12) from Arabidopsis thaliana (Mouse-ear cress).